Reading from the N-terminus, the 75-residue chain is MKADIHPNYHTITVVMTDGTEYQTRSTWGKEGDKLNLDIDPKSHPAWTGGTQQIMDRGGRVSRFQKKFQGFLKKD.

The protein belongs to the bacterial ribosomal protein bL31 family. Type A subfamily. As to quaternary structure, part of the 50S ribosomal subunit.

Binds the 23S rRNA. The protein is Large ribosomal subunit protein bL31 of Bradyrhizobium sp. (strain BTAi1 / ATCC BAA-1182).